The primary structure comprises 157 residues: Transmembrane protein 50A (157 aa).

Position 2 is an N-acetylserine (Ser2). Ser2 carries the phosphoserine modification. Helical transmembrane passes span 26–46, 58–78, 95–115, and 126–146; these read IAAGVLFFTGWWIIIDAAVMY, TCGVIATIAFLMINAVSNGQV, IWLFIGFMLAFGSLIASMWIL, and VVYPGIAVFFQNAFIFFGGLV.

This sequence belongs to the UPF0220 family.

The protein resides in the membrane. The polypeptide is Transmembrane protein 50A (Tmem50a) (Mus musculus (Mouse)).